Here is a 2376-residue protein sequence, read N- to C-terminus: MAG2-interacting protein 2 (2376 aa).

Forms a complex with MAG2, ZW10/MIP1 and MIP3 on the endoplasmic reticulum.

Its subcellular location is the endoplasmic reticulum membrane. Functionally, required for proper maturation of seed storage proteins. Forms a complex with MAG2, ZW10/MIP1 and MIP3 on the endoplasmic reticulum that may be responsible for efficient transport of seed storage proteins. The protein is MAG2-interacting protein 2 of Arabidopsis thaliana (Mouse-ear cress).